A 184-amino-acid chain; its full sequence is NADH-quinone oxidoreductase subunit B (184 aa).

[4Fe-4S] cluster contacts are provided by Cys37, Cys38, Cys103, and Cys132.

This sequence belongs to the complex I 20 kDa subunit family. NDH-1 is composed of 14 different subunits. Subunits NuoB, C, D, E, F, and G constitute the peripheral sector of the complex. The cofactor is [4Fe-4S] cluster.

It is found in the cell membrane. It carries out the reaction a quinone + NADH + 5 H(+)(in) = a quinol + NAD(+) + 4 H(+)(out). Functionally, NDH-1 shuttles electrons from NADH, via FMN and iron-sulfur (Fe-S) centers, to quinones in the respiratory chain. The immediate electron acceptor for the enzyme in this species is believed to be a menaquinone. Couples the redox reaction to proton translocation (for every two electrons transferred, four hydrogen ions are translocated across the cytoplasmic membrane), and thus conserves the redox energy in a proton gradient. This chain is NADH-quinone oxidoreductase subunit B, found in Nocardioides sp. (strain ATCC BAA-499 / JS614).